A 1273-amino-acid polypeptide reads, in one-letter code: DNA-directed RNA polymerase subunit beta (1273 aa).

The protein belongs to the RNA polymerase beta chain family. As to quaternary structure, the RNAP catalytic core consists of 2 alpha, 1 beta, 1 beta' and 1 omega subunit. When a sigma factor is associated with the core the holoenzyme is formed, which can initiate transcription.

It catalyses the reaction RNA(n) + a ribonucleoside 5'-triphosphate = RNA(n+1) + diphosphate. DNA-dependent RNA polymerase catalyzes the transcription of DNA into RNA using the four ribonucleoside triphosphates as substrates. This Aster yellows witches'-broom phytoplasma (strain AYWB) protein is DNA-directed RNA polymerase subunit beta.